The sequence spans 445 residues: MRLSRYFLPVLKENPSEAQIVSHRYMLRAGMIKQQAAGIYSWLPLGFKVLKRIEQIVHEEQIRAGHIPLLMPTLQPADLWRESGRYDDYGEEMLRITDRHKRDMLYGPTNEEMITDIFRSHVSSYKDLPLTLYHIQWKFRDEIRPRFGVMRGREFLMKDGYNFDLDYESAIHAYNRHMVSYLRTYERMGLQAIPMRAASGPIGGDNTHEFLVLASTGESEVFYDAAITDLKFGDRVVNYDDRAECEAIVKEWTAPYARTDETHDEAVFGQIPEERRRSSRGIEVGQIFYFGTKYSEPMGATVVTADGSRVPVHMGSHGIGVSRLLGAIIEASHDDKGIIWPEGVTPFHAGIVNLKQGDSSTDLACEALYRDLSARGLEPLYDDRDERAGAKFATMDLIGLPWRITVGPRGISAGKVELTNRRTGESEEMSSGAAVDRLAQIYAGI.

This sequence belongs to the class-II aminoacyl-tRNA synthetase family. ProS type 2 subfamily. Homodimer.

Its subcellular location is the cytoplasm. The catalysed reaction is tRNA(Pro) + L-proline + ATP = L-prolyl-tRNA(Pro) + AMP + diphosphate. Catalyzes the attachment of proline to tRNA(Pro) in a two-step reaction: proline is first activated by ATP to form Pro-AMP and then transferred to the acceptor end of tRNA(Pro). The polypeptide is Proline--tRNA ligase (Cereibacter sphaeroides (strain ATCC 17029 / ATH 2.4.9) (Rhodobacter sphaeroides)).